The sequence spans 531 residues: Serine protease gd (531 aa).

A signal peptide spans 1 to 19; sequence MRLHLAAILILCIEHVTKA. Residues 155-174 form a disordered region; the sequence is PEEEEVRKTDDKPPSTPHIQ. Positions 246 to 531 constitute a Peptidase S1 domain; it reads IESDSADSLP…FLDWITAFVI (286 aa). A glycan (N-linked (GlcNAc...) asparagine) is linked at N272. C280 and C296 form a disulfide bridge. Active-site charge relay system residues include H295 and D350. N397 and N445 each carry an N-linked (GlcNAc...) asparagine glycan. Residues C432 and C449 are joined by a disulfide bond. The Charge relay system role is filled by S471.

This sequence belongs to the peptidase S1 family. Post-translationally, proteolytically activated by the protease ndl. As to expression, expression begins in previtellogenic stages and is seen in germline-derived nurse cells of the germarium. Expression continues throughout oogenesis with transcripts from the nurse cells accumulating in the oocytes. Most abundant in the ovaries, the level of protein decreases from the moment of egg laying and is essentially gone by 4 hours.

The protein localises to the secreted. Functionally, component of the extracellular signaling pathway that establishes the dorsal-ventral pathway of the embryo. A protease cascade involving ndl, gd, snk and ea results in activation of the spz Toll receptor ligand; acts downstream of ndl but upstream of snk and ea. Activation of ea requires activation of the ndl-gd-snk protease cascade and sulfation of a vitelline membrane component by pip. Localized activation of the Toll receptor in the ventral region of the embryo defines cell identities along the dorsal-ventral continuum. The protein is Serine protease gd of Drosophila melanogaster (Fruit fly).